The sequence spans 938 residues: Phosphoenolpyruvate carboxylase (938 aa).

Residues His151 and Lys591 contribute to the active site.

Belongs to the PEPCase type 1 family. The cofactor is Mg(2+).

It catalyses the reaction oxaloacetate + phosphate = phosphoenolpyruvate + hydrogencarbonate. Forms oxaloacetate, a four-carbon dicarboxylic acid source for the tricarboxylic acid cycle. The polypeptide is Phosphoenolpyruvate carboxylase (Roseiflexus castenholzii (strain DSM 13941 / HLO8)).